Here is a 210-residue protein sequence, read N- to C-terminus: Syntaxin-binding protein 6 (210 aa).

An N-acetylserine modification is found at serine 2. Residues 151–210 (GNSILHSAADSVTSAVQKASQALNERGERLGRAEEKTEDLKNSAQQFAETAHKLAMKHKC) form the v-SNARE coiled-coil homology domain.

In terms of assembly, part of a ternary complex containing SNAP25 and STX1A that can be dissociated by NAPA and NSF. Interacts with STX4A. Detected at low levels in brain, and at very low levels in heart, adrenal gland, testis, liver and kidney.

Its subcellular location is the cytoplasm. The protein localises to the membrane. In terms of biological role, forms non-fusogenic complexes with SNAP25 and STX1A and may thereby modulate the formation of functional SNARE complexes and exocytosis. The sequence is that of Syntaxin-binding protein 6 (STXBP6) from Homo sapiens (Human).